The sequence spans 410 residues: Adenosylhomocysteinase (410 aa).

The substrate site is built by aspartate 117 and glutamate 142. NAD(+) is bound at residue threonine 143–threonine 145. The substrate site is built by lysine 172 and aspartate 176. NAD(+)-binding positions include asparagine 177, glycine 206–glycine 211, glutamate 229, alanine 285–histidine 287, and asparagine 332.

This sequence belongs to the adenosylhomocysteinase family. NAD(+) is required as a cofactor.

Its subcellular location is the cytoplasm. The catalysed reaction is S-adenosyl-L-homocysteine + H2O = L-homocysteine + adenosine. The protein operates within amino-acid biosynthesis; L-homocysteine biosynthesis; L-homocysteine from S-adenosyl-L-homocysteine: step 1/1. In terms of biological role, may play a key role in the regulation of the intracellular concentration of adenosylhomocysteine. This Thermoplasma volcanium (strain ATCC 51530 / DSM 4299 / JCM 9571 / NBRC 15438 / GSS1) protein is Adenosylhomocysteinase.